The primary structure comprises 101 residues: Small ribosomal subunit protein uS14 (101 aa).

Residues 32-67 (SDAKRSDEEREAARLGLQKLPRNANPTRQRNRCEIT) are disordered. Positions 33 to 44 (DAKRSDEEREAA) are enriched in basic and acidic residues.

Belongs to the universal ribosomal protein uS14 family. Part of the 30S ribosomal subunit. Contacts proteins S3 and S10.

Its function is as follows. Binds 16S rRNA, required for the assembly of 30S particles and may also be responsible for determining the conformation of the 16S rRNA at the A site. In Paracidovorax citrulli (strain AAC00-1) (Acidovorax citrulli), this protein is Small ribosomal subunit protein uS14.